The sequence spans 92 residues: Antifungal protein B (92 aa).

An N-terminal signal peptide occupies residues M1–A18. A propeptide spanning residues N19–Q34 is cleaved from the precursor. 3 cysteine pairs are disulfide-bonded: C42–C70, C49–C77, and C62–C88.

The protein resides in the secreted. It is found in the host cytoplasm. Functionally, antifungal protein that acts as an inhibitor of growth of human pathogenic molds and yeasts. Is active against the model organism Neurospora crassa, the opportunistic human pathogens Aspergillus fumigatus, Trichophyton rubrum, and Aspergillus terreus. Provokes a reduction of the incidence of infections caused by Penicillium digitatum and Penicillium italicum in oranges and by Penicillium expansum in apples. Low doses of pafB have self-inhibition activity. Also shows activity against the model yeast Saccaromyces cerevisiae and the opportunistic human pathogen Candida albicans. No antibacterial activity is observed on the Gram-negative Escherichia coli and the Gram-positive Bacillus subtilis. Finally, also shows anti-viral activity in a model of HCoV 229E infected L132 cells. The sequence is that of Antifungal protein B from Penicillium chrysogenum (Penicillium notatum).